A 394-amino-acid polypeptide reads, in one-letter code: Elongation factor Tu (394 aa).

A tr-type G domain is found at 10–204 (KPHVNVGTIG…HLDTYIPEPE (195 aa)). The G1 stretch occupies residues 19–26 (GHVDHGKT). 19-26 (GHVDHGKT) lines the GTP pocket. Threonine 26 contributes to the Mg(2+) binding site. The interval 60 to 64 (GITIN) is G2. The G3 stretch occupies residues 81 to 84 (DCPG). Residues 81–85 (DCPGH) and 136–139 (NKCD) each bind GTP. The segment at 136-139 (NKCD) is G4. The interval 174-176 (SAL) is G5.

It belongs to the TRAFAC class translation factor GTPase superfamily. Classic translation factor GTPase family. EF-Tu/EF-1A subfamily. Monomer.

Its subcellular location is the cytoplasm. The enzyme catalyses GTP + H2O = GDP + phosphate + H(+). In terms of biological role, GTP hydrolase that promotes the GTP-dependent binding of aminoacyl-tRNA to the A-site of ribosomes during protein biosynthesis. The chain is Elongation factor Tu from Aeromonas salmonicida (strain A449).